The chain runs to 488 residues: MSFNHKTIEELHDLLVAKEISATELTQKTLEDIKSREEAVGSFITVSEEAALKQAAAIDAKGIDSDNLMSGIPLAVKDNISTKGILTTAASKMLYNYEPIFDATSVANAYAKDMIVIGKTNMDEFAMGGSTETSYFKKTKNAWDHTKVPGGSSGGSATAVASGQVRLSLGSDTGGSIRQPAAFNGVVGLKPTYGTVSRYGLIAFGSSLDQIGPFAPTVKENAQLLNVVASSDVKDATSAPVRIADYTSKIGRDIKGMKIALPKEYLGEGIDPEIKETVLAAAKQFEALGATVEEVSLPHSKYGVAVYYIIASSEASSNLQRFDGIRYGFRADDAKNLDEIYVNTRSQGFGDEVKRRIMLGTFSLSSGYYDAYFKKAGQVRTLIIEDFDKVFADYDLILGPTTPTVAFGLDTLNHDPVAMYLADLLTIPVNLAGLPGISIPAGFVDGLPVGLQLIGPKYTEETIYQAAAAFEAVTDYHKQQPIIFGGDK.

Catalysis depends on charge relay system residues K77 and S152. S176 acts as the Acyl-ester intermediate in catalysis.

Belongs to the amidase family. GatA subfamily. Heterotrimer of A, B and C subunits.

The catalysed reaction is L-glutamyl-tRNA(Gln) + L-glutamine + ATP + H2O = L-glutaminyl-tRNA(Gln) + L-glutamate + ADP + phosphate + H(+). Functionally, allows the formation of correctly charged Gln-tRNA(Gln) through the transamidation of misacylated Glu-tRNA(Gln) in organisms which lack glutaminyl-tRNA synthetase. The reaction takes place in the presence of glutamine and ATP through an activated gamma-phospho-Glu-tRNA(Gln). The polypeptide is Glutamyl-tRNA(Gln) amidotransferase subunit A (Streptococcus pyogenes serotype M3 (strain ATCC BAA-595 / MGAS315)).